Here is a 177-residue protein sequence, read N- to C-terminus: MITNQQFNDNIEEFISIMLANLKLKGTDFEFSVNNNYVNKWNIDKMYSFVSVSVKQLRIDFTISFDDLYGVPLLNMRLYDNDTFLTSPMAQRTLAVGICRVDLHNHHLLQQPWLQVHPCETLQTIDSHLKNTPTCKYNSVIQYLCCWFGLYGLPSIFPQFSVRPNIYINNVQSCKIK.

Cys135 functions as the Glycyl thioester intermediate in the catalytic mechanism.

Belongs to the ATG10 family. In terms of assembly, forms homooligomers.

It is found in the preautophagosomal structure membrane. Its function is as follows. E2-like enzyme required for the cytoplasm to vacuole transport (Cvt), autophagy and nucleophagy. Acts as an E2-like enzyme that catalyzes the conjugation of ATG12 to ATG5. ATG12 conjugation to ATG5 is required for proper localization of ATG8 to the preautophagosomal structure (PAS). Likely serves as an ATG5-recognition molecule. In Candida albicans (strain SC5314 / ATCC MYA-2876) (Yeast), this protein is Ubiquitin-like-conjugating enzyme ATG10 (ATG10).